A 740-amino-acid chain; its full sequence is MAPSFDTLTEQDLHEEEEEEIDFSDLKEQYEVKLEEGLDTFVVIDGLPVVPEESRQKLIKFLLRKLNTVGHTSEDAVFMPLNDKNMSEGFAFVEYETPEQAIAAVKQLHGVPLDKKHTLAVNKLMDIDRYGREGRIDEEYKPPTIEPFKEKEHLRSWLGDANARDQFALYRGDKVGVFWNNKSNPPENVVDRAHWTQLFVQWSPKGTYLASVHPQGVQLWGGPAFSKQKQFPHPFVQLVEFSPGESYLTTWSARPIQVEEGHPVLTYEEDGKNIIIWDIVTGKPLRSFVSHDLTAGPGGDGEPKKKVQWPAFKWSADEKYVARMQQHQSISIYELPRMNLLGKTSVKIDGVMDFEWSPATVVREGVKQYEQLLCFWTPEIGSNPARVALMSVPSKEIVRTRNLFNVSDVKLHWQSQGTYVCVKVDRHSKSKKSMATNLEIFRVREKGVPVEVVDSLKDTVINFAWEPNGGRFVAITTGEAPSGAAVLPKTSVSFFAPEKKGVSAGNFKVVRTIEKKTSNAIYWSPKGRFVVVATVHSQTNFDIDFWDMDFEGEKPEGEKDLAANLQLMKTVEHYGVTDIDWDPTGRYVVSSASVWTHSMENGYNIHTFAGQTLAEHPTDKFKQFIWRPRPPTLLSKEEQKQVRKNLREYSKEFDEEDKYAVDIANTAVVETRKRVLNEWAAWIRREKEMLAEEKDAYGVPEDVDSSKQAKDAPAVSEDQGETVVEEIVEEIIEENEEVIG.

Polar residues predominate over residues 1–10 (MAPSFDTLTE). The tract at residues 1-22 (MAPSFDTLTEQDLHEEEEEEID) is disordered. A compositionally biased stretch (acidic residues) spans 13-22 (LHEEEEEEID). In terms of domain architecture, RRM spans 40–126 (TFVVIDGLPV…HTLAVNKLMD (87 aa)). WD repeat units follow at residues 193-230 (AHWT…KQKQ), 232-289 (PHPF…RSFV), 302-343 (EPKK…LLGK), 513-556 (IEKK…EKPE), and 571-609 (VEHY…HTFA). The interval 695–721 (DAYGVPEDVDSSKQAKDAPAVSEDQGE) is disordered.

Belongs to the eIF-3 subunit B family. As to quaternary structure, component of the eukaryotic translation initiation factor 3 (eIF-3) complex.

The protein resides in the cytoplasm. Its function is as follows. RNA-binding component of the eukaryotic translation initiation factor 3 (eIF-3) complex, which is involved in protein synthesis of a specialized repertoire of mRNAs and, together with other initiation factors, stimulates binding of mRNA and methionyl-tRNAi to the 40S ribosome. The eIF-3 complex specifically targets and initiates translation of a subset of mRNAs involved in cell proliferation. This chain is Eukaryotic translation initiation factor 3 subunit B (prt1), found in Aspergillus niger (strain ATCC MYA-4892 / CBS 513.88 / FGSC A1513).